The following is a 282-amino-acid chain: Protein GAM-1 (282 aa).

A BC-box-like motif is present at residues Ser251–Val260.

In terms of assembly, interacts with host HDAC1. Interacts with host E1-activating enzyme (SAE1/UBA2 heterodimer). Interacts with host retinoblastoma protein. Seems to form a complex with host E4F1 and HDAC1. Seems to form complexes with either CUL2-elongin BC complex-RBX1 or CUL5-elongin BC complex-RBX1. Interacts with TCEB1/Elongin-C, CUL2 and CUL5 in vitro.

It is found in the host nucleus. Its function is as follows. Early protein essential for viral replication. Strong and global transcriptional activator of both viral and cellular genes. Activates transcription by blocking host retinoblastoma protein (RB) and inhibiting the SUMO pathway. Inhibition of host RB leads to the activation of E2F1-dependent transcription and, in particular, of E2F1-regulated S-phase genes. Stimulation of progression from G1 to S phase allows the virus to efficiently use the cellular DNA replicating machinery to achieve viral genome replication. Blocks the SUMO pathway by targeting the E1 enzyme (SAE1/UBA2 heterodimer) to the ubiquitin-proteasome machinery. Mediates SAE1 degradation possibly through the formation of complexes with either CUL2-elongin BC complex-RBX1 or CUL5-elongin BC complex-RBX1. The degradation of UBA2 is probably a consequent effect of SAE1 disappearance. Inhibits HDAC1 sumoylation, thereby interfering with histone deacetylation mediated by HDAC1, leading to activation of transcription. Mediates induction of heat-shock response. Seems to have an antiapoptotic function. In Galliformes (FAdV-1), this protein is Protein GAM-1.